We begin with the raw amino-acid sequence, 332 residues long: MKVTFEQLKAAFNRVLISRGVDSETANACAEMFARTTESGVYSHGVNRFPRFIQQLENGDIIPDAQPKRITSLGAIEQWDAQRSIGNLTAKKMMDRAIELAADHGIGLVALRNANHWMRGGSYGWQAAEKGYIGICWTNSIAVMPPWGAKECRIGTNPLIVAIPSTPITMVDMSMSMFSYGMLEVNRLAGRQLPVDGGFDDEGNLTKEPGVIEKNRRILPMGYWKGSGMSIVLDMIATLLSDGASVAEVTQDNSDEYGISQIFIAIEVDKLIDGPTRDAKLQRIMDYVTTAERADENQAIRLPGHEFTTLLAENRRNGITVDDSVWAKIQAL.

The active-site Proton donor is the His-44. Residues 168 to 174 (ITMVDMS), 224 to 225 (WK), and 304 to 306 (GHE) each bind NAD(+).

The protein belongs to the LDH2/MDH2 oxidoreductase family. DlgD subfamily. In terms of assembly, homodimer.

The protein localises to the cytoplasm. It catalyses the reaction 3-dehydro-L-gulonate + NAD(+) = 2,3-dioxo-L-gulonate + NADH + H(+). It carries out the reaction 3-dehydro-L-gulonate + NADP(+) = 2,3-dioxo-L-gulonate + NADPH + H(+). In terms of biological role, catalyzes the reduction of 2,3-diketo-L-gulonate in the presence of NADH, to form 3-keto-L-gulonate. The chain is 2,3-diketo-L-gulonate reductase from Escherichia coli O139:H28 (strain E24377A / ETEC).